Consider the following 372-residue polypeptide: tRNA-specific 2-thiouridylase MnmA (372 aa).

Residues 16-23 and Met42 contribute to the ATP site; that span reads GMSGGVDS. Residues 102 to 104 form an interaction with target base in tRNA region; it reads NPD. The active-site Nucleophile is the Cys107. Residues Cys107 and Cys205 are joined by a disulfide bond. An ATP-binding site is contributed by Gly132. The tract at residues 155 to 157 is interaction with tRNA; that stretch reads KDQ. Residue Cys205 is the Cysteine persulfide intermediate of the active site. The interval 317–318 is interaction with tRNA; it reads RY.

The protein belongs to the MnmA/TRMU family.

It localises to the cytoplasm. The enzyme catalyses S-sulfanyl-L-cysteinyl-[protein] + uridine(34) in tRNA + AH2 + ATP = 2-thiouridine(34) in tRNA + L-cysteinyl-[protein] + A + AMP + diphosphate + H(+). Functionally, catalyzes the 2-thiolation of uridine at the wobble position (U34) of tRNA, leading to the formation of s(2)U34. The polypeptide is tRNA-specific 2-thiouridylase MnmA (Shewanella baltica (strain OS185)).